The chain runs to 743 residues: Catalase-peroxidase (743 aa).

Residues 1 to 15 (MSSDSRPPQPDTSTQ) show a composition bias toward polar residues. The interval 1–40 (MSSDSRPPQPDTSTQSNSESESPAISSPTPQDHAPMTNRD) is disordered. Residues 16 to 28 (SNSESESPAISSP) are compositionally biased toward low complexity. Positions 110–233 (WHAAGTYRIQ…YGATTMGLIY (124 aa)) form a cross-link, tryptophyl-tyrosyl-methioninium (Trp-Tyr) (with M-259). His-111 functions as the Proton acceptor in the catalytic mechanism. The tryptophyl-tyrosyl-methioninium (Tyr-Met) (with W-110) cross-link spans 233–259 (YVNPEGPEGKPDPVAAAHDIRETFARM). His-274 lines the heme b pocket. The disordered stretch occupies residues 490–511 (DKRGGANGGRLRLEPQKSWESN).

The protein belongs to the peroxidase family. Peroxidase/catalase subfamily. As to quaternary structure, homodimer or homotetramer. Requires heme b as cofactor. Formation of the three residue Trp-Tyr-Met cross-link is important for the catalase, but not the peroxidase activity of the enzyme.

It carries out the reaction H2O2 + AH2 = A + 2 H2O. The catalysed reaction is 2 H2O2 = O2 + 2 H2O. Its function is as follows. Bifunctional enzyme with both catalase and broad-spectrum peroxidase activity. This Mycobacterium marinum (strain ATCC BAA-535 / M) protein is Catalase-peroxidase.